The following is a 315-amino-acid chain: Acetyl-coenzyme A carboxylase carboxyl transferase subunit alpha (315 aa).

The region spanning Leu-36–Val-289 is the CoA carboxyltransferase C-terminal domain.

The protein belongs to the AccA family. Acetyl-CoA carboxylase is a heterohexamer composed of biotin carboxyl carrier protein (AccB), biotin carboxylase (AccC) and two subunits each of ACCase subunit alpha (AccA) and ACCase subunit beta (AccD).

It is found in the cytoplasm. It catalyses the reaction N(6)-carboxybiotinyl-L-lysyl-[protein] + acetyl-CoA = N(6)-biotinyl-L-lysyl-[protein] + malonyl-CoA. Its pathway is lipid metabolism; malonyl-CoA biosynthesis; malonyl-CoA from acetyl-CoA: step 1/1. In terms of biological role, component of the acetyl coenzyme A carboxylase (ACC) complex. First, biotin carboxylase catalyzes the carboxylation of biotin on its carrier protein (BCCP) and then the CO(2) group is transferred by the carboxyltransferase to acetyl-CoA to form malonyl-CoA. The protein is Acetyl-coenzyme A carboxylase carboxyl transferase subunit alpha of Francisella philomiragia subsp. philomiragia (strain ATCC 25017 / CCUG 19701 / FSC 153 / O#319-036).